The following is a 444-amino-acid chain: Elongation factor 1-alpha (444 aa).

The region spanning 15-238 is the tr-type G domain; it reads KPHINLAVVG…DSFQPPQRPV (224 aa). Residues 24-31 form a G1 region; it reads GHVDNGKS. 24–31 lines the GTP pocket; that stretch reads GHVDNGKS. Serine 31 serves as a coordination point for Mg(2+). Residues 80–84 are G2; the sequence is GVTIE. The interval 101-104 is G3; that stretch reads DLPG. GTP is bound by residues 101–105 and 163–166; these read DLPGH and NKMD. The interval 163–166 is G4; the sequence is NKMD. Positions 202 to 204 are G5; the sequence is SAI.

Belongs to the TRAFAC class translation factor GTPase superfamily. Classic translation factor GTPase family. EF-Tu/EF-1A subfamily.

The protein resides in the cytoplasm. It carries out the reaction GTP + H2O = GDP + phosphate + H(+). In terms of biological role, GTP hydrolase that promotes the GTP-dependent binding of aminoacyl-tRNA to the A-site of ribosomes during protein biosynthesis. This Pyrobaculum aerophilum (strain ATCC 51768 / DSM 7523 / JCM 9630 / CIP 104966 / NBRC 100827 / IM2) protein is Elongation factor 1-alpha.